A 134-amino-acid polypeptide reads, in one-letter code: Complexin-2 (134 aa).

The interval Met-1–Glu-114 is disordered. Residues Asp-15–Ala-85 are compositionally biased toward basic and acidic residues. Residues Asp-29–Ala-84 are a coiled coil.

The protein belongs to the complexin/synaphin family. In terms of assembly, binds to the SNARE core complex containing SNAP25, VAMP2 and STX1A. As to expression, nervous system. Present in electric organ (at protein level).

Its subcellular location is the cytoplasm. It localises to the cytosol. It is found in the presynapse. The protein resides in the nucleus. The protein localises to the perikaryon. In terms of biological role, positively regulates a late step in synaptic vesicle exocytosis. The polypeptide is Complexin-2 (Narke japonica (Japanese sleeper ray)).